We begin with the raw amino-acid sequence, 94 residues long: Co-chaperonin GroES (94 aa).

Belongs to the GroES chaperonin family. As to quaternary structure, heptamer of 7 subunits arranged in a ring. Interacts with the chaperonin GroEL.

Its subcellular location is the cytoplasm. Functionally, together with the chaperonin GroEL, plays an essential role in assisting protein folding. The GroEL-GroES system forms a nano-cage that allows encapsulation of the non-native substrate proteins and provides a physical environment optimized to promote and accelerate protein folding. GroES binds to the apical surface of the GroEL ring, thereby capping the opening of the GroEL channel. This Lactococcus lactis subsp. cremoris (strain SK11) protein is Co-chaperonin GroES.